Consider the following 344-residue polypeptide: MIKVGIVGGTGYTGVELLRLLAQHPQAEVAVITSRSEAGLRVDEMYPNLRGHYPELAFSVPDVATLGACDVVFFATPHGVAHALAGELLAAGTRVIDLSADFRLQDAEEWAKWYGQPHGAPELLSEAVYGLPEVNREAIKTARLIAVPGCYPTATQLGLIPLLEAGLADAGSLIADCKSGVSGAGRGASVGSLFCEAGESMKAYSVKGHRHLPEIRQGLRLAAGGDVGLTFVPHLTPMIRGIHATLYARVTDTSVDLQALFEQRYANEPFVDVMPAGSHPETRSVRGGNVCRIAVHRPQGGDLVVVLSVIDNLVKGASGQAVQNMNILFGLDERLGLSHAALLP.

Cysteine 150 is an active-site residue.

This sequence belongs to the NAGSA dehydrogenase family. Type 1 subfamily.

The protein localises to the cytoplasm. The enzyme catalyses N-acetyl-L-glutamate 5-semialdehyde + phosphate + NADP(+) = N-acetyl-L-glutamyl 5-phosphate + NADPH + H(+). It participates in amino-acid biosynthesis; L-arginine biosynthesis; N(2)-acetyl-L-ornithine from L-glutamate: step 3/4. Functionally, catalyzes the NADPH-dependent reduction of N-acetyl-5-glutamyl phosphate to yield N-acetyl-L-glutamate 5-semialdehyde. The protein is N-acetyl-gamma-glutamyl-phosphate reductase of Ectopseudomonas mendocina (strain ymp) (Pseudomonas mendocina).